Consider the following 361-residue polypeptide: Aminomethyltransferase (361 aa).

It belongs to the GcvT family. The glycine cleavage system is composed of four proteins: P, T, L and H.

The enzyme catalyses N(6)-[(R)-S(8)-aminomethyldihydrolipoyl]-L-lysyl-[protein] + (6S)-5,6,7,8-tetrahydrofolate = N(6)-[(R)-dihydrolipoyl]-L-lysyl-[protein] + (6R)-5,10-methylene-5,6,7,8-tetrahydrofolate + NH4(+). Its function is as follows. The glycine cleavage system catalyzes the degradation of glycine. The chain is Aminomethyltransferase from Phocaeicola vulgatus (strain ATCC 8482 / DSM 1447 / JCM 5826 / CCUG 4940 / NBRC 14291 / NCTC 11154) (Bacteroides vulgatus).